The sequence spans 358 residues: Trace amine-associated receptor 7b (358 aa).

At 1–47 the chain is on the extracellular side; sequence MATDDDRFPWDQDSILSRDLLSASSMQLCYEKLNRSCVRSPYSPGPR. A glycan (N-linked (GlcNAc...) asparagine) is linked at Asn-34. Intrachain disulfides connect Cys-37–Cys-201 and Cys-120–Cys-205. The helical transmembrane segment at 48–68 threads the bilayer; that stretch reads LILYAVFGFGAVLAVCGNLLV. Over 69 to 83 the chain is Cytoplasmic; it reads MTSILHFRQLHSPAN. A helical transmembrane segment spans residues 84–104; sequence FLVASLACADFLVGLTVMPFS. The Extracellular portion of the chain corresponds to 105-125; that stretch reads MVRSVEGCWYFGDIYCKFHSS. Residues 126-147 traverse the membrane as a helical segment; the sequence is FDGSFCYSSIFHLCFISADRYI. Topologically, residues 148–166 are cytoplasmic; the sequence is AVSDPLIYPTRFTASVSGK. The helical transmembrane segment at 167-187 threads the bilayer; the sequence is CITFSWLLSIIYSFSLFYTGV. At 188 to 211 the chain is on the extracellular side; that stretch reads NEAGLEDLVSALTCVGGCQIAVNQ. Asn-210 carries N-linked (GlcNAc...) asparagine glycosylation. Residues 212 to 232 traverse the membrane as a helical segment; the sequence is SWVFINFLLFLVPALVMMTVY. The Cytoplasmic segment spans residues 233–274; that stretch reads SKIFLIAKQQAQNIEKMGKQTARASESYKDRVAKRERKAAKT. A helical membrane pass occupies residues 275–295; sequence LGIAVAAFLLSWLPYFIDSII. The Extracellular segment spans residues 296 to 309; the sequence is DAFLGFVTPTYVYE. The chain crosses the membrane as a helical span at residues 310-332; that stretch reads ILVWIGYYNSAMNPLIYAFFYPW. At 333-358 the chain is on the cytoplasmic side; it reads FRKAIKLIVTGKILRENSSATNLFPE.

The protein belongs to the G-protein coupled receptor 1 family.

It is found in the cell membrane. Functionally, olfactory receptor specific for N,N-dimethylalkylamines trace amines, such as N,N-dimethylcyclohexylamine. Trace amine compounds are enriched in animal body fluids and act on trace amine-associated receptors (TAARs) to elicit both intraspecific and interspecific innate behaviors. Ligand-binding causes a conformation change that triggers signaling via G(s)-class of G alpha proteins (GNAL or GNAS). The chain is Trace amine-associated receptor 7b from Rattus norvegicus (Rat).